The following is a 438-amino-acid chain: 3-phosphoshikimate 1-carboxyvinyltransferase (438 aa).

3-phosphoshikimate is bound by residues K26, S27, and R31. K26 serves as a coordination point for phosphoenolpyruvate. Phosphoenolpyruvate contacts are provided by G99 and R127. 3-phosphoshikimate contacts are provided by S172, Q174, D320, and K347. Q174 is a binding site for phosphoenolpyruvate. D320 functions as the Proton acceptor in the catalytic mechanism. The phosphoenolpyruvate site is built by R351 and R392.

It belongs to the EPSP synthase family. As to quaternary structure, monomer.

The protein localises to the cytoplasm. The enzyme catalyses 3-phosphoshikimate + phosphoenolpyruvate = 5-O-(1-carboxyvinyl)-3-phosphoshikimate + phosphate. Its pathway is metabolic intermediate biosynthesis; chorismate biosynthesis; chorismate from D-erythrose 4-phosphate and phosphoenolpyruvate: step 6/7. In terms of biological role, catalyzes the transfer of the enolpyruvyl moiety of phosphoenolpyruvate (PEP) to the 5-hydroxyl of shikimate-3-phosphate (S3P) to produce enolpyruvyl shikimate-3-phosphate and inorganic phosphate. The polypeptide is 3-phosphoshikimate 1-carboxyvinyltransferase (Xanthomonas campestris pv. campestris (strain B100)).